A 1374-amino-acid chain; its full sequence is Alpha,alpha-trehalose-phosphate synthase [UDP-forming] 1 (1374 aa).

Disordered regions lie at residues 28 to 66 (DTGK…SDKD), 86 to 117 (YTPG…DDEG), and 1352 to 1374 (KADS…SKQQ). Basic and acidic residues-rich tracts occupy residues 56–66 (DPFDRPKSDKD) and 86–95 (YTPGKEKGVD). Composition is skewed to acidic residues over residues 96–109 (QDES…EDHD) and 1356–1368 (YYDD…DQED).

The protein in the N-terminal section; belongs to the glycosyltransferase 20 family. In the C-terminal section; belongs to the gob-1 trehalose phosphatase family.

The enzyme catalyses D-glucose 6-phosphate + UDP-alpha-D-glucose = alpha,alpha-trehalose 6-phosphate + UDP + H(+). Functionally, catalyzes the production of trehalose from glucose-6-phosphate and UDP-alpha-D-glucose in a 2 step process. In Caenorhabditis briggsae, this protein is Alpha,alpha-trehalose-phosphate synthase [UDP-forming] 1 (tps-1).